Reading from the N-terminus, the 173-residue chain is NADH-ubiquinone oxidoreductase chain 6 (173 aa).

6 helical membrane passes run 1–21, 27–47, 53–73, 82–102, 106–126, and 141–161; these read MIYF…AVAS, FAAL…VGYG, LVLF…SAAL, WGSW…LLVG, YGWW…MSVL, and GFLL…VLEI.

It belongs to the complex I subunit 6 family.

The protein localises to the mitochondrion membrane. The enzyme catalyses a ubiquinone + NADH + 5 H(+)(in) = a ubiquinol + NAD(+) + 4 H(+)(out). Core subunit of the mitochondrial membrane respiratory chain NADH dehydrogenase (Complex I) that is believed to belong to the minimal assembly required for catalysis. Complex I functions in the transfer of electrons from NADH to the respiratory chain. The immediate electron acceptor for the enzyme is believed to be ubiquinone. This is NADH-ubiquinone oxidoreductase chain 6 (MT-ND6) from Latimeria chalumnae (Coelacanth).